The sequence spans 479 residues: Probable aspartic-type endopeptidase OPSB (479 aa).

An N-terminal signal peptide occupies residues 1-19 (MRGDSFIWSLTTAASLLYA). In terms of domain architecture, Peptidase A1 spans 58 to 393 (SGKTVSQDLD…DLDNNEISIA (336 aa)). A glycan (N-linked (GlcNAc...) asparagine) is linked at Asn68. Residue Asp76 is part of the active site. Asn121 carries an N-linked (GlcNAc...) asparagine glycan. Asp275 is an active-site residue. An N-linked (GlcNAc...) asparagine glycan is attached at Asn398. The disordered stretch occupies residues 435–454 (LSGIETGVPGARPTSRGAAP). Gly451 carries the GPI-anchor amidated glycine lipid modification. Residues 452–479 (AAPTMRPDVTFGVAAAGLAGAGILFAFM) constitute a propeptide, removed in mature form.

Belongs to the peptidase A1 family.

Its subcellular location is the cell membrane. Probable GPI-anchored aspartic-type endopeptidase which contributes to virulence. This chain is Probable aspartic-type endopeptidase OPSB (OPSB), found in Arthroderma otae (strain ATCC MYA-4605 / CBS 113480) (Microsporum canis).